The chain runs to 421 residues: Phosphatidylinositol 5-phosphate 4-kinase type-2 gamma (421 aa).

N-acetylalanine is present on A2. S26 carries the post-translational modification Phosphoserine. The region spanning 43–420 is the PIPK domain; it reads AADPLVGVFL…RFLDFITNIF (378 aa). The interval 69–75 is required for interaction with PIP5K1A; it reads VMLLPDD. S349 is modified (phosphoserine).

As to quaternary structure, interacts with PIP5K1A; the interaction inhibits PIP5K1A kinase activity. In terms of processing, phosphorylated, phosphorylation is induced by EGF.

It is found in the endoplasmic reticulum. It localises to the cytoplasm. It carries out the reaction a 1,2-diacyl-sn-glycero-3-phospho-(1D-myo-inositol-5-phosphate) + ATP = a 1,2-diacyl-sn-glycero-3-phospho-(1D-myo-inositol-4,5-bisphosphate) + ADP + H(+). The enzyme catalyses 1,2-dihexadecanoyl-sn-glycero-3-phospho-(1D-myo-inositol-5-phosphate) + ATP = 1,2-dihexadecanoyl-sn-glycero-3-phospho-(1D-myo-inositol-4,5-bisphosphate) + ADP + H(+). It catalyses the reaction 1,2-dihexadecanoyl-sn-glycero-3-phospho-(1D-myo-inositol-5-phosphate) + GTP = 1,2-dihexadecanoyl-sn-glycero-3-phospho-(1D-myo-inositol-4,5-bisphosphate) + GDP + H(+). In terms of biological role, phosphatidylinositol 5-phosphate 4-kinase with low enzymatic activity. May be a GTP sensor, has higher GTP-dependent kinase activity than ATP-dependent kinase activity. PIP4Ks negatively regulate insulin signaling through a catalytic-independent mechanism. They interact with PIP5Ks and suppress PIP5K-mediated PtdIns(4,5)P2 synthesis and insulin-dependent conversion to PtdIns(3,4,5)P3. The chain is Phosphatidylinositol 5-phosphate 4-kinase type-2 gamma (PIP4K2C) from Pongo abelii (Sumatran orangutan).